We begin with the raw amino-acid sequence, 148 residues long: Arginine repressor (148 aa).

The protein belongs to the ArgR family.

Its subcellular location is the cytoplasm. The protein operates within amino-acid biosynthesis; L-arginine biosynthesis [regulation]. Functionally, regulates arginine biosynthesis genes. This Pelodictyon phaeoclathratiforme (strain DSM 5477 / BU-1) protein is Arginine repressor.